The chain runs to 271 residues: Putative carboxymethylenebutenolidase (271 aa).

Active-site residues include cysteine 147, aspartate 204, and histidine 236.

It belongs to the dienelactone hydrolase family.

The catalysed reaction is 2-(5-oxo-2,5-dihydrofuran-2-ylidene)acetate + H2O = 4-oxohex-2-enedioate + H(+). This Escherichia coli (strain K12) protein is Putative carboxymethylenebutenolidase (ysgA).